We begin with the raw amino-acid sequence, 405 residues long: L-rhamnonate dehydratase (405 aa).

The substrate site is built by histidine 33 and arginine 59. Aspartate 226, glutamate 252, and glutamate 280 together coordinate Mg(2+). Histidine 329 functions as the Proton acceptor in the catalytic mechanism. A substrate-binding site is contributed by glutamate 349.

Belongs to the mandelate racemase/muconate lactonizing enzyme family. RhamD subfamily. As to quaternary structure, homooctamer; tetramer of dimers. The cofactor is Mg(2+).

The enzyme catalyses L-rhamnonate = 2-dehydro-3-deoxy-L-rhamnonate + H2O. In terms of biological role, catalyzes the dehydration of L-rhamnonate to 2-keto-3-deoxy-L-rhamnonate (KDR). The sequence is that of L-rhamnonate dehydratase from Escherichia coli O9:H4 (strain HS).